The following is a 258-amino-acid chain: Trans-aconitate 2-methyltransferase (258 aa).

Belongs to the methyltransferase superfamily. Tam family.

Its subcellular location is the cytoplasm. It carries out the reaction trans-aconitate + S-adenosyl-L-methionine = (E)-3-(methoxycarbonyl)pent-2-enedioate + S-adenosyl-L-homocysteine. Functionally, catalyzes the S-adenosylmethionine monomethyl esterification of trans-aconitate. The protein is Trans-aconitate 2-methyltransferase of Deinococcus radiodurans (strain ATCC 13939 / DSM 20539 / JCM 16871 / CCUG 27074 / LMG 4051 / NBRC 15346 / NCIMB 9279 / VKM B-1422 / R1).